The primary structure comprises 502 residues: ATP synthase subunit alpha (502 aa).

Position 169–176 (169–176 (GDRQTGKT)) interacts with ATP.

The protein belongs to the ATPase alpha/beta chains family. In terms of assembly, F-type ATPases have 2 components, CF(1) - the catalytic core - and CF(0) - the membrane proton channel. CF(1) has five subunits: alpha(3), beta(3), gamma(1), delta(1), epsilon(1). CF(0) has three main subunits: a(1), b(2) and c(9-12). The alpha and beta chains form an alternating ring which encloses part of the gamma chain. CF(1) is attached to CF(0) by a central stalk formed by the gamma and epsilon chains, while a peripheral stalk is formed by the delta and b chains.

It localises to the cell membrane. It catalyses the reaction ATP + H2O + 4 H(+)(in) = ADP + phosphate + 5 H(+)(out). Produces ATP from ADP in the presence of a proton gradient across the membrane. The alpha chain is a regulatory subunit. This chain is ATP synthase subunit alpha, found in Streptococcus pyogenes serotype M12 (strain MGAS9429).